A 423-amino-acid polypeptide reads, in one-letter code: F-box/LRR-repeat protein 2 (423 aa).

The F-box domain occupies 9-55; it reads GRINKKLPKELLLRIFSFLDIVTLCRCAQISKAWNILALDGSNWQRI. 13 LRR repeats span residues 61-87, 88-113, 114-139, 140-165, 166-191, 192-217, 218-243, 244-269, 270-295, 296-321, 322-350, 351-375, and 376-401; these read QTDV…SLRG, CIGV…NLNG, CTKI…DLTS, CVSI…NLSW, CDQI…LLRG, CTQL…NLQS, CSRI…CLSG, CSNL…EAAR, CSHL…DLEE, CILI…SLSH, CELI…ELDN, CLLI…ELYD, and CQQV…AYFA. The tract at residues 80–90 is interaction with Calmodulin; the sequence is LRKLSLRGCIG. Lysine 201 participates in a covalent cross-link: Glycyl lysine isopeptide (Lys-Gly) (interchain with G-Cter in ubiquitin). Threonine 404 is subject to Phosphothreonine. A lipid anchor (S-geranylgeranyl cysteine) is attached at cysteine 420. The short motif at 420–423 is the CAAX motif element; sequence CVIL.

Part of the SCF (SKP1-CUL1-F-box) E3 ubiquitin-protein ligase complex SCF(FBXL2) composed of CUL1, SKP1, RBX1 and FBXL2. Interacts with calmodulin; may antagonize substrate ubiquitination by SCF(FBXL2). May interact with PIK3R1. Interacts with PTPN13. Post-translationally, phosphorylated by GSK-beta (GSK3B), promoting recognition by FBXO3, leading to its ubiquitination by the SCF(FBXO3) complex. Ubiquitinated at Lys-201 by the SCF(FBXO3) complex in response to lipopolysaccharide (LPS), leading to its degradation by the proteasome.

The protein resides in the membrane. The protein operates within protein modification; protein ubiquitination. Its function is as follows. Calcium-activated substrate recognition component of the SCF (SKP1-cullin-F-box protein) E3 ubiquitin-protein ligase complex, SCF(FBXL2), which mediates the ubiquitination and subsequent proteasomal degradation of target proteins. Unlike many F-box proteins, FBXL2 does not seem to target phosphodegron within its substrates but rather calmodulin-binding motifs and is thereby antagonized by calmodulin. This is the case for the cyclins CCND2 and CCND3 which polyubiquitination and subsequent degradation are inhibited by calmodulin. Through CCND2 and CCND3 degradation induces cell-cycle arrest in G(0). SCF(FBXL2) also mediates PIK3R2 ubiquitination and proteasomal degradation thereby regulating phosphatidylinositol 3-kinase signaling and autophagy. PCYT1A monoubiquitination by SCF(FBXL2) and subsequent degradation regulates synthesis of phosphatidylcholine, which is utilized for formation of membranes and of pulmonary surfactant. The SCF(FBXL2) complex acts as a regulator of inflammation by mediating ubiquitination and degradation of TRAF proteins (TRAF1, TRAF2, TRAF3, TRAF4, TRAF5 and TRAF6). The SCF(FBXL2) complex acts as a negative regulator of the NLRP3 inflammasome by mediating ubiquitination and degradation of NLRP3. The polypeptide is F-box/LRR-repeat protein 2 (Pongo abelii (Sumatran orangutan)).